A 575-amino-acid chain; its full sequence is Alpha-(1,6)-fucosyltransferase (575 aa).

Over methionine 1–arginine 9 the chain is Cytoplasmic. Residues tryptophan 10 to valine 30 traverse the membrane as a helical; Signal-anchor for type II membrane protein segment. The Lumenal segment spans residues arginine 31–lysine 575. 3 cysteine pairs are disulfide-bonded: cysteine 204–cysteine 266, cysteine 212–cysteine 230, and cysteine 218–cysteine 222. The region spanning lysine 206–leucine 493 is the GT23 domain. Serine 278 is modified (phosphoserine). The SH3-binding signature appears at proline 299–proline 305. The important for donor substrate binding stretch occupies residues arginine 365–arginine 366. A disulfide bridge connects residues cysteine 465 and cysteine 472. The 62-residue stretch at glutamine 502 to glutamate 563 folds into the SH3 domain.

It belongs to the glycosyltransferase 23 family. In terms of processing, tyrosine phosphorylated by PKDCC/VLK.

It localises to the golgi apparatus. Its subcellular location is the golgi stack membrane. The catalysed reaction is N(4)-{beta-D-GlcNAc-(1-&gt;2)-alpha-D-Man-(1-&gt;3)-[beta-D-GlcNAc-(1-&gt;2)-alpha-D-Man-(1-&gt;6)]-beta-D-Man-(1-&gt;4)-beta-D-GlcNAc-(1-&gt;4)-beta-D-GlcNAc}-L-asparaginyl-[protein] + GDP-beta-L-fucose = an N(4)-{beta-D-GlcNAc-(1-&gt;2)-alpha-D-Man-(1-&gt;3)-[beta-D-GlcNAc-(1-&gt;2)-alpha-D-Man-(1-&gt;6)]-beta-D-Man-(1-&gt;4)-beta-D-GlcNAc-(1-&gt;4)-[alpha-L-Fuc-(1-&gt;6)]-beta-D-GlcNAc}-L-asparaginyl-[protein] + GDP + H(+). It participates in protein modification; protein glycosylation. Its function is as follows. Catalyzes the addition of fucose in alpha 1-6 linkage to the first GlcNAc residue, next to the peptide chains in N-glycans. This Mus musculus (Mouse) protein is Alpha-(1,6)-fucosyltransferase (Fut8).